A 111-amino-acid polypeptide reads, in one-letter code: Large ribosomal subunit protein uL22 (111 aa).

It belongs to the universal ribosomal protein uL22 family. In terms of assembly, part of the 50S ribosomal subunit.

This protein binds specifically to 23S rRNA; its binding is stimulated by other ribosomal proteins, e.g. L4, L17, and L20. It is important during the early stages of 50S assembly. It makes multiple contacts with different domains of the 23S rRNA in the assembled 50S subunit and ribosome. Its function is as follows. The globular domain of the protein is located near the polypeptide exit tunnel on the outside of the subunit, while an extended beta-hairpin is found that lines the wall of the exit tunnel in the center of the 70S ribosome. This Acholeplasma laidlawii protein is Large ribosomal subunit protein uL22.